The chain runs to 643 residues: Nucleolar GTP-binding protein 1 (643 aa).

The region spanning 168 to 340 (RTLLICGYPN…VRNKACEKLL (173 aa)) is the OBG-type G domain. GTP contacts are provided by residues 174-181 (GYPNVGKS), 220-224 (DTPGI), and 288-291 (NKTD). Residues 568-643 (GDQEDSAPAG…KRGVGKTDFR (76 aa)) are disordered. Basic and acidic residues predominate over residues 594–622 (MRSKAERMAKLERRERNRMARAGESDRHA).

It belongs to the TRAFAC class OBG-HflX-like GTPase superfamily. OBG GTPase family. NOG subfamily.

The protein resides in the nucleus. The protein localises to the nucleolus. In terms of biological role, involved in the biogenesis of the 60S ribosomal subunit. The protein is Nucleolar GTP-binding protein 1 (NOG1) of Kluyveromyces lactis (strain ATCC 8585 / CBS 2359 / DSM 70799 / NBRC 1267 / NRRL Y-1140 / WM37) (Yeast).